Reading from the N-terminus, the 41-residue chain is Large ribosomal subunit protein bL36 (41 aa).

This sequence belongs to the bacterial ribosomal protein bL36 family.

This Xylella fastidiosa (strain 9a5c) protein is Large ribosomal subunit protein bL36.